The sequence spans 229 residues: MVYKILIVDDDQEILKLMKTALEMRNYEVATHQNISLPLDITDFQGFDLILLDIMMSNIEGTEICKRIRREISTPIIFVSAKDTEEDIINGLGIGGDDYITKPFSLKQLVAKVEANIKREERNKHAVHVFSEIRRDLGPITFYLEERRVCVNGQTIPLTCREYDILELLSQRTSKVYTREDIYDDVYDEYSNALFRSISEYIYQIRSKFAPYDINPIKTVRGLGYQWHG.

Positions K4–I117 constitute a Response regulatory domain. D53 bears the 4-aspartylphosphate mark. Positions E132–G229 form a DNA-binding region, ompR/PhoB-type.

In terms of processing, phosphorylated by NisK.

Member of the two-component regulatory system NisK/NisR involved in the regulation of the biosynthesis of lantibiotic nisin. NisR may function as a regulatory protein. This is Nisin biosynthesis regulatory protein NisR (nisR) from Lactococcus lactis subsp. lactis (Streptococcus lactis).